A 324-amino-acid polypeptide reads, in one-letter code: Ribosomal RNA small subunit methyltransferase H (324 aa).

S-adenosyl-L-methionine-binding positions include glycine 35–histidine 37, aspartate 55, phenylalanine 85, aspartate 103, and glutamine 110.

The protein belongs to the methyltransferase superfamily. RsmH family.

It is found in the cytoplasm. The catalysed reaction is cytidine(1402) in 16S rRNA + S-adenosyl-L-methionine = N(4)-methylcytidine(1402) in 16S rRNA + S-adenosyl-L-homocysteine + H(+). Its function is as follows. Specifically methylates the N4 position of cytidine in position 1402 (C1402) of 16S rRNA. The sequence is that of Ribosomal RNA small subunit methyltransferase H from Solidesulfovibrio magneticus (strain ATCC 700980 / DSM 13731 / RS-1) (Desulfovibrio magneticus).